The primary structure comprises 111 residues: Histone H2A-Bbd type 1 (111 aa).

The protein belongs to the histone H2A family. The nucleosome is a histone octamer containing two molecules each of H2A, H2B, H3 and H4 assembled in one H3-H4 heterotetramer and two H2A-H2B heterodimers. Incorporated into nucleosomes during late spermatogenesis. Interacts with H2BC1/TH2B; preferentially dimerizes with H2BC1/TH2B to form nucleosomes. As to expression, highly expressed in adult testis, mainly in spermatocytes.

The protein localises to the nucleus. The protein resides in the chromosome. Its function is as follows. Atypical histone H2A which replaces conventional H2A during late spermatogenesis and is involved in the replacement of histones to protamine in male germ cells. Core component of nucleosome: nucleosomes wrap and compact DNA into chromatin, limiting DNA accessibility to the cellular machineries which require DNA as a template. Nucleosomes containing H2AB1 only wrap 130 bp of DNA, compared to 147 bp for classical nucleosomes. In condensing spermatids, the heterodimer between H2AB1 and H2BC1/TH2B is loaded onto the nucleosomes and promotes loading of transition proteins (TNP1 and TNP2) onto the nucleosomes. Inclusion of the H2AB1-H2BC1/TH2B dimer into chromatin opens the nucleosomes, releasing the nucleosomal DNA ends and allowing the invasion of nucleosomes by transition proteins (TNP1 and TNP2). Then, transition proteins drive the recruitment and processing of protamines, which are responsible for histone eviction. The sequence is that of Histone H2A-Bbd type 1 (H2ab1) from Mus musculus (Mouse).